We begin with the raw amino-acid sequence, 205 residues long: Holliday junction resolvase RecU (205 aa).

A disordered region spans residues 1-26; sequence MIRYPNGKSYQPIQPIGTKKRISGES. Residues T86, D88, E101, and Q120 each coordinate Mg(2+).

This sequence belongs to the RecU family. Mg(2+) is required as a cofactor.

Its subcellular location is the cytoplasm. The enzyme catalyses Endonucleolytic cleavage at a junction such as a reciprocal single-stranded crossover between two homologous DNA duplexes (Holliday junction).. In terms of biological role, endonuclease that resolves Holliday junction intermediates in genetic recombination. Cleaves mobile four-strand junctions by introducing symmetrical nicks in paired strands. Promotes annealing of linear ssDNA with homologous dsDNA. Required for DNA repair, homologous recombination and chromosome segregation. The polypeptide is Holliday junction resolvase RecU (Bacillus pumilus (strain SAFR-032)).